Consider the following 280-residue polypeptide: Ribosomal RNA small subunit methyltransferase A (280 aa).

S-adenosyl-L-methionine-binding residues include His-13, Leu-15, Gly-40, Glu-61, Asp-85, and Asn-105.

Belongs to the class I-like SAM-binding methyltransferase superfamily. rRNA adenine N(6)-methyltransferase family. RsmA subfamily.

The protein localises to the cytoplasm. The enzyme catalyses adenosine(1518)/adenosine(1519) in 16S rRNA + 4 S-adenosyl-L-methionine = N(6)-dimethyladenosine(1518)/N(6)-dimethyladenosine(1519) in 16S rRNA + 4 S-adenosyl-L-homocysteine + 4 H(+). Its function is as follows. Specifically dimethylates two adjacent adenosines (A1518 and A1519) in the loop of a conserved hairpin near the 3'-end of 16S rRNA in the 30S particle. May play a critical role in biogenesis of 30S subunits. The polypeptide is Ribosomal RNA small subunit methyltransferase A (Phocaeicola vulgatus (strain ATCC 8482 / DSM 1447 / JCM 5826 / CCUG 4940 / NBRC 14291 / NCTC 11154) (Bacteroides vulgatus)).